Consider the following 165-residue polypeptide: Protein SprT (165 aa).

The SprT-like domain occupies 20–162; it reads EKLAQANLKL…YRCVHCGEQL (143 aa). His-78 is a Zn(2+) binding site. Glu-79 is an active-site residue. A Zn(2+)-binding site is contributed by His-82.

It belongs to the SprT family. The cofactor is Zn(2+).

The protein resides in the cytoplasm. The protein is Protein SprT of Escherichia coli (strain SMS-3-5 / SECEC).